The primary structure comprises 161 residues: MKHPVYARYLEFDDVVLDLTSLIFLEFDNAQNEEYIIFMNVKKAFYKNFHITCDLSLETLTVLVYEKARLIVKQMEFEQPPNFVNFISFNATDNDNSMIIDLCSDARIIVAKKLTPDETYHQRVSGFLDFQKRNCIPRPPIESDPKVRDALDRELEIKLYK.

This is an uncharacterized protein from Lepidoptera (butterflies and moths).